Reading from the N-terminus, the 171-residue chain is S-ribosylhomocysteine lyase (171 aa).

His54, His58, and Cys128 together coordinate Fe cation.

This sequence belongs to the LuxS family. Homodimer. Fe cation serves as cofactor.

It catalyses the reaction S-(5-deoxy-D-ribos-5-yl)-L-homocysteine = (S)-4,5-dihydroxypentane-2,3-dione + L-homocysteine. Its function is as follows. Involved in the synthesis of autoinducer 2 (AI-2) which is secreted by bacteria and is used to communicate both the cell density and the metabolic potential of the environment. The regulation of gene expression in response to changes in cell density is called quorum sensing. Catalyzes the transformation of S-ribosylhomocysteine (RHC) to homocysteine (HC) and 4,5-dihydroxy-2,3-pentadione (DPD). The polypeptide is S-ribosylhomocysteine lyase (Salmonella typhi).